We begin with the raw amino-acid sequence, 365 residues long: Aminomethyltransferase (365 aa).

The protein belongs to the GcvT family. The glycine cleavage system is composed of four proteins: P, T, L and H.

It catalyses the reaction N(6)-[(R)-S(8)-aminomethyldihydrolipoyl]-L-lysyl-[protein] + (6S)-5,6,7,8-tetrahydrofolate = N(6)-[(R)-dihydrolipoyl]-L-lysyl-[protein] + (6R)-5,10-methylene-5,6,7,8-tetrahydrofolate + NH4(+). In terms of biological role, the glycine cleavage system catalyzes the degradation of glycine. The chain is Aminomethyltransferase from Yersinia pseudotuberculosis serotype O:3 (strain YPIII).